The chain runs to 97 residues: RNA-binding protein Hfq (97 aa).

Positions 10 to 70 (DPFLNALRKE…ISTIVPARSV (61 aa)) constitute a Sm domain. The segment at 75–97 (ENRPQAAPASTLVQVETVQQPAE) is disordered. Residues 85–97 (TLVQVETVQQPAE) are compositionally biased toward polar residues.

Belongs to the Hfq family. As to quaternary structure, homohexamer.

Functionally, RNA chaperone that binds small regulatory RNA (sRNAs) and mRNAs to facilitate mRNA translational regulation in response to envelope stress, environmental stress and changes in metabolite concentrations. Also binds with high specificity to tRNAs. This Neisseria meningitidis serogroup C / serotype 2a (strain ATCC 700532 / DSM 15464 / FAM18) protein is RNA-binding protein Hfq.